Here is a 181-residue protein sequence, read N- to C-terminus: Putative poly [ADP-ribose] polymerase-like 100L (181 aa).

The PARP catalytic domain maps to 1-181 (MDNLKEEETN…KIKYIIHITK (181 aa)).

The catalysed reaction is NAD(+) + (ADP-D-ribosyl)n-acceptor = nicotinamide + (ADP-D-ribosyl)n+1-acceptor + H(+).. The polypeptide is Putative poly [ADP-ribose] polymerase-like 100L (Invertebrate iridescent virus 6 (IIV-6)).